We begin with the raw amino-acid sequence, 526 residues long: Bifunctional purine biosynthesis protein PurH (526 aa).

Residues 1–148 form the MGS-like domain; sequence MSLNNIIKNA…KNYKDVIVIV (148 aa).

Belongs to the PurH family.

The enzyme catalyses (6R)-10-formyltetrahydrofolate + 5-amino-1-(5-phospho-beta-D-ribosyl)imidazole-4-carboxamide = 5-formamido-1-(5-phospho-D-ribosyl)imidazole-4-carboxamide + (6S)-5,6,7,8-tetrahydrofolate. It carries out the reaction IMP + H2O = 5-formamido-1-(5-phospho-D-ribosyl)imidazole-4-carboxamide. Its pathway is purine metabolism; IMP biosynthesis via de novo pathway; 5-formamido-1-(5-phospho-D-ribosyl)imidazole-4-carboxamide from 5-amino-1-(5-phospho-D-ribosyl)imidazole-4-carboxamide (10-formyl THF route): step 1/1. It participates in purine metabolism; IMP biosynthesis via de novo pathway; IMP from 5-formamido-1-(5-phospho-D-ribosyl)imidazole-4-carboxamide: step 1/1. The polypeptide is Bifunctional purine biosynthesis protein PurH (Buchnera aphidicola subsp. Schizaphis graminum (strain Sg)).